A 1347-amino-acid polypeptide reads, in one-letter code: MLNRENKTAITRKGMVSNRLNKFSIRKYTVGTASILVGTTLIFGLGNQEAKAAESTNKELNEATTSASDNQSSDKVDMQQLNQEDNTKNDNQKEMVSSQGNETTSNGNKSIEKESVQSTTGNKVEVSTAKSDEQASPKSTNEDLNTKQTISNQEALQPDLQENKSVVNAQPTNEENKKVDAKTESTTLNVKSDAIKSNAETLVDNNSNSNNENNADIILPKSTAPKRLNTRMRIAAVQPSSTEAKNVNDLITSNTTLTVVDADKNNKIVPAQDYLELKSQIKVDDKVKSGDYFTIKYSDTVQVYGLNPEDIKNIGDIKDPNNGETIATAKHDTANNLITYTFTDYVDRFNSVQMGINYSIYMDADTIPVSKNDVEFNVTIGNTTTKTTANIQYPDYVVNEKNSIGSAFTETVSHVGNKENPGYYKQTIYINPSENSLTNAKLKVQAYHSSYPNNIGQINKEVTDIKIYQVPKGYTLNKGYDVNTKELTDVTNQYLQKITYGDNNSAVIDFGNADSAYVVMVNTKFQYTTSESPTLVQMVTLSSDNSKSASMGNALGFTNNQSGGAGQEVYKIGNYVWEDTNKNGVQELGEKGVGNVTVTVFDNNTNTKVGEAVTKEDGSYLIPNLPNGDYRVEFSNLPKGYEVTPSKQGNNEELDSNGLSSVITVNGKDNLSADLGIYKPKYNLGDYVWEDTNKNGIQDQDEKGISGVTVTLKDENGNVLKTVTTDADGKYKFTDLDNGNYKVEFTTPEGYTPTTVTSGSDIEKDSNGLTTTGVINGADNMTLDSGFYKTPKYNLGNYVWEDTNKDGKQDSTEKGISGVTVTLKNENGEVLQTTKTDKDGKYQFTGLENGTYKVEFETPSGYTPTQVGSGTDEGIDSNGTSTTGVIKDKDNDTIDSGFYKPTYNLGDYVWEDTNKNGVQDKDEKGISGVTVTLKDENDKVLKTVTTDENGKYQFTDLNNGTYKVEFETPSGYTPTSVTSGNDTEKDSNGLTTTGVIKDADNMTLDSGFYKTSKYSLGDYVWYDSNKDGKQDSTEKGIKDVKVTLLNEKGEVIGTTKTDENGKYRFDNLDSGKYKVIFEKPAGLTQTGTNTTEDDKDADGGEVDVTITDHDDFTLDNGYFEEDTSDSDSDSDSDSDSDSDSDSDSDSDSDSDSDSDSDSDSDSDSDSDSDSDSDSDSDSDSDSDSDSDSDSDSDSDSDSDSDSDSDSDSDSDSDSDSDSDSDSDSDSDSDSESDSDSDSDSDSDSDSDSDSDSDSDSDSDSDSDSDSDSDSDSDSDSDSDSDSDSDSDAGKHTPVKPMSTTKDHHNKAKALPETGNENSGSNNATLFGGLFAALGSLLLFGRRKKQNK.

The signal sequence occupies residues 1–35 (MLNRENKTAITRKGMVSNRLNKFSIRKYTVGTASI). The YSIRK-G/S signaling motif motif lies at 23–34 (FSIRKYTVGTAS). A ligand binding A region region spans residues 36 to 568 (LVGTTLIFGL…NNQSGGAGQE (533 aa)). Positions 55–185 (STNKELNEAT…NKKVDAKTES (131 aa)) are disordered. 2 stretches are compositionally biased toward polar residues: residues 62–71 (EATTSASDNQ) and 94–109 (EMVS…NGNK). Over residues 130-145 (KSDEQASPKSTNEDLN) the composition is skewed to basic and acidic residues. Polar residues-rich tracts occupy residues 146–155 (TKQTISNQEA) and 163–173 (NKSVVNAQPTN). Residues 174 to 183 (EENKKVDAKT) show a composition bias toward basic and acidic residues. CNA-B domains lie at 569–680 (VYKI…IYKP), 681–791 (KYNL…YKTP), 792–901 (KYNL…FYKP), 902–1012 (TYNL…YKTS), and 1013–1123 (KYSL…EEDT). 3 disordered regions span residues 857-883 (ETPS…TSTT), 972-992 (YTPT…GLTT), and 1078-1323 (EKPA…SNNA). 2 stretches are compositionally biased toward polar residues: residues 860-869 (SGYTPTQVGS) and 972-981 (YTPTSVTSGN). Composition is skewed to acidic residues over residues 1091–1101 (TEDDKDADGGE) and 1118–1286 (YFEE…DSDS). An LPXTG sorting signal motif is present at residues 1310–1314 (LPETG). Pentaglycyl murein peptidoglycan amidated threonine is present on threonine 1313. Residues 1314 to 1347 (GNENSGSNNATLFGGLFAALGSLLLFGRRKKQNK) constitute a propeptide, removed by sortase.

Belongs to the serine-aspartate repeat-containing protein (SDr) family. In terms of assembly, interacts with host DSG1; this interaction increases S.aureus adherence to keratinocytes.

Its subcellular location is the secreted. The protein resides in the cell wall. Its function is as follows. Cell surface-associated calcium-binding protein which plays an important role in adhesion and pathogenesis. Mediates interactions with components of the extracellular matrix such as host DSG1 to promote bacterial adhesion to host cells. Contributes to the resistance to killing by innate immune components such as neutrophils present in blood and thus attenuates bacterial clearance. In Staphylococcus aureus (strain MW2), this protein is Serine-aspartate repeat-containing protein D (sdrD).